The chain runs to 74 residues: Cytochrome c oxidase subunit 2 (74 aa).

Residues Met-1–Ser-14 are Mitochondrial intermembrane-facing. The chain crosses the membrane as a helical span at residues Pro-15–Met-45. The Mitochondrial matrix segment spans residues Val-46–Ile-74.

This sequence belongs to the cytochrome c oxidase subunit 2 family. As to quaternary structure, component of the cytochrome c oxidase (complex IV, CIV), a multisubunit enzyme composed of 14 subunits. The complex is composed of a catalytic core of 3 subunits MT-CO1, MT-CO2 and MT-CO3, encoded in the mitochondrial DNA, and 11 supernumerary subunits COX4I, COX5A, COX5B, COX6A, COX6B, COX6C, COX7A, COX7B, COX7C, COX8 and NDUFA4, which are encoded in the nuclear genome. The complex exists as a monomer or a dimer and forms supercomplexes (SCs) in the inner mitochondrial membrane with NADH-ubiquinone oxidoreductase (complex I, CI) and ubiquinol-cytochrome c oxidoreductase (cytochrome b-c1 complex, complex III, CIII), resulting in different assemblies (supercomplex SCI(1)III(2)IV(1) and megacomplex MCI(2)III(2)IV(2)). Found in a complex with TMEM177, COA6, COX18, COX20, SCO1 and SCO2. Interacts with TMEM177 in a COX20-dependent manner. Interacts with COX20. Interacts with COX16. The cofactor is Cu cation.

The protein resides in the mitochondrion inner membrane. It catalyses the reaction 4 Fe(II)-[cytochrome c] + O2 + 8 H(+)(in) = 4 Fe(III)-[cytochrome c] + 2 H2O + 4 H(+)(out). Its function is as follows. Component of the cytochrome c oxidase, the last enzyme in the mitochondrial electron transport chain which drives oxidative phosphorylation. The respiratory chain contains 3 multisubunit complexes succinate dehydrogenase (complex II, CII), ubiquinol-cytochrome c oxidoreductase (cytochrome b-c1 complex, complex III, CIII) and cytochrome c oxidase (complex IV, CIV), that cooperate to transfer electrons derived from NADH and succinate to molecular oxygen, creating an electrochemical gradient over the inner membrane that drives transmembrane transport and the ATP synthase. Cytochrome c oxidase is the component of the respiratory chain that catalyzes the reduction of oxygen to water. Electrons originating from reduced cytochrome c in the intermembrane space (IMS) are transferred via the dinuclear copper A center (CU(A)) of subunit 2 and heme A of subunit 1 to the active site in subunit 1, a binuclear center (BNC) formed by heme A3 and copper B (CU(B)). The BNC reduces molecular oxygen to 2 water molecules using 4 electrons from cytochrome c in the IMS and 4 protons from the mitochondrial matrix. This chain is Cytochrome c oxidase subunit 2 (mt-co2), found in Megalops atlanticus (Tarpon).